The sequence spans 544 residues: Protein angel homolog 2 (544 aa).

Belongs to the CCR4/nocturin family.

The sequence is that of Protein angel homolog 2 (ANGEL2) from Bos taurus (Bovine).